A 395-amino-acid polypeptide reads, in one-letter code: FAD-dependent monooxygenase cctM (395 aa).

Residues 1–23 (MEPGTDVRRVLVIGAGAAGLLIA) form the signal peptide. Positions 37, 52, and 112 each coordinate FAD. N-linked (GlcNAc...) asparagine glycans are attached at residues Asn-138 and Asn-298. Position 306 (Asp-306) interacts with FAD.

The protein belongs to the paxM FAD-dependent monooxygenase family. It depends on FAD as a cofactor.

It participates in mycotoxin biosynthesis. Functionally, FAD-dependent monooxygenase; part of the gene cluster that mediates the biosynthesis of the mycotoxin cyclochlorotine, a hepatotoxic and carcinogenic cyclic chlorinated pentapeptide. The function of cctM within the pathway, if any, remains undetermined. The NRPS cctN initially catalyzes the condensation of L-serine (Ser), Pro, L-2-aminobutyrate (2Abu), Ser, and beta-Phe in this order to produce isocyclotine. After the dichlorination of Pro2 catalyzed by cctP2 to produce isocyclochlorotine, the cctO-mediated transacylation of isocyclochlorotine can furnish cyclochlorotine. The subsequent hydroxylation of cyclochlorotine by cctR yields hydroxycyclochlorotine as the final product. CctP1 probably acts as a phenylalanine aminomutase and provides the uncommon building block beta-Phe. Furthermore, 2Abu can be synthesized from threonine by one of the threonine dehydratases and transaminases localized outside of the cluster. The functions of the remaining proteins encoded by the cluster, cctM and cctT, have not been identified yet. The chain is FAD-dependent monooxygenase cctM from Talaromyces islandicus (Penicillium islandicum).